Here is a 433-residue protein sequence, read N- to C-terminus: 4-hydroxy-3-methylbut-2-en-1-yl diphosphate synthase (flavodoxin) (433 aa).

[4Fe-4S] cluster contacts are provided by Cys-320, Cys-323, Cys-366, and Glu-373.

This sequence belongs to the IspG family. Requires [4Fe-4S] cluster as cofactor.

It carries out the reaction (2E)-4-hydroxy-3-methylbut-2-enyl diphosphate + oxidized [flavodoxin] + H2O + 2 H(+) = 2-C-methyl-D-erythritol 2,4-cyclic diphosphate + reduced [flavodoxin]. The protein operates within isoprenoid biosynthesis; isopentenyl diphosphate biosynthesis via DXP pathway; isopentenyl diphosphate from 1-deoxy-D-xylulose 5-phosphate: step 5/6. Its function is as follows. Converts 2C-methyl-D-erythritol 2,4-cyclodiphosphate (ME-2,4cPP) into 1-hydroxy-2-methyl-2-(E)-butenyl 4-diphosphate. The polypeptide is 4-hydroxy-3-methylbut-2-en-1-yl diphosphate synthase (flavodoxin) (Beijerinckia indica subsp. indica (strain ATCC 9039 / DSM 1715 / NCIMB 8712)).